The primary structure comprises 464 residues: Sulfoacetaldehyde dehydrogenase (acylating) (464 aa).

Cys241 acts as the Nucleophile in catalysis.

This sequence belongs to the aldehyde dehydrogenase family.

The enzyme catalyses sulfoacetaldehyde + NADP(+) + CoA = sulfoacetyl-CoA + NADPH + H(+). Functionally, involved in the degradation of sulfoacetate. Catalyzes the conversion of sulfoacetyl-CoA and NADPH to sulfoacetaldehyde, CoA and NADP(+). A much lower level of activity (1%) is observed when NADP(+) is replaced with NAD(+). The chain is Sulfoacetaldehyde dehydrogenase (acylating) from Bilophila wadsworthia (strain 3_1_6).